A 1034-amino-acid chain; its full sequence is AP-3 complex subunit delta (1034 aa).

HEAT repeat units follow at residues 35–72 (KYIS…LGYD), 143–180 (DLSR…RYPE), 181–217 (ALRP…KNPK), 219–255 (YLPL…LEPR), 258–297 (KKLI…GMPN), 299–337 (SASI…THPK), 338–374 (SVQA…KKNL), 376–414 (EIVK…LYVT), 415–452 (NFEW…RVPV), and 570–609 (NSAC…EIVQ). Disordered stretches follow at residues 637–660 (DLDE…EHDK), 669–688 (QAGT…ELTP), 701–723 (EQSN…NADQ), and 758–1034 (QEQQ…KEIL). Residue S683 is modified to Phosphoserine. The residue at position 687 (T687) is a Phosphothreonine. Basic residues predominate over residues 769–784 (GKKKHKKGKKSKKAKN). Basic and acidic residues-rich tracts occupy residues 822 to 836 (KDGK…RALD) and 882 to 906 (KDKD…RKEA). A compositionally biased stretch (low complexity) spans 928–942 (SATSNNNNTSTVLPD). Residues 986–1003 (KVHKKKHKKEKSQRKEKK) show a composition bias toward basic residues. Residues 1007–1016 (ESASVSAIVS) are compositionally biased toward low complexity. The segment covering 1025–1034 (GISTPSKEIL) has biased composition (polar residues).

The protein belongs to the adaptor complexes large subunit family. Adaptor protein complex 3 (AP-3) is a heterotetramer composed of two large chains (delta and beta3), a medium chain (mu3) and a small chain (sigma3).

It localises to the cytoplasmic vesicle. It is found in the clathrin-coated vesicle membrane. The protein localises to the golgi apparatus. Part of the AP-3 complex, an adapter-related complex which is not clathrin-associated. The complex is associated with the Golgi region as well as more peripheral structures. It facilitates the budding of vesicles from the Golgi membrane and may be directly involved in trafficking to lysosomes. Its function is as follows. May be a coat protein involved in the formation of specialized structures like pigment granules. This chain is AP-3 complex subunit delta (g), found in Drosophila melanogaster (Fruit fly).